Reading from the N-terminus, the 443-residue chain is 26S proteasome regulatory subunit 4 homolog B (443 aa).

Disordered regions lie at residues 1 to 55 (MGQG…LPTV) and 87 to 108 (RLKP…LRGT). 2 stretches are compositionally biased toward basic and acidic residues: residues 12–28 (QGDR…KKFE) and 87–106 (RLKP…DDLR). Residue 229–236 (GEPGTGKT) participates in ATP binding. Glycyl lysine isopeptide (Lys-Gly) (interchain with G-Cter in ubiquitin) cross-links involve residues K296 and K433.

This sequence belongs to the AAA ATPase family. As to quaternary structure, component of the 19S regulatory particle (RP/PA700) base subcomplex of the 26S proteasome. The 26S proteasome is composed of a core protease (CP), known as the 20S proteasome, capped at one or both ends by the 19S regulatory particle (RP/PA700). The RP/PA700 complex is composed of at least 17 different subunits in two subcomplexes, the base and the lid, which form the portions proximal and distal to the 20S proteolytic core, respectively. As to expression, preferentially expressed in the root and shoot apical meristem.

The protein resides in the cytoplasm. It localises to the nucleus. The 26S protease is involved in the ATP-dependent degradation of ubiquitinated proteins. The regulatory (or ATPase) complex confers ATP dependency and substrate specificity to the 26S complex. Acts redundantly with RPT2A in the regulation of gametogenesis. With RPT2A plays a critical role in 26S proteasome assembly. This chain is 26S proteasome regulatory subunit 4 homolog B, found in Arabidopsis thaliana (Mouse-ear cress).